A 112-amino-acid chain; its full sequence is Nitrogen regulatory protein P-II (112 aa).

Ser-49 is modified (phosphoserine). Position 51 is an O-UMP-tyrosine (Tyr-51).

It belongs to the P(II) protein family. Homotrimer. In terms of processing, phosphorylation dependent on the nitrogen source and spectral light quality.

Its function is as follows. P-II indirectly controls the transcription of the GS gene (glnA). P-II prevents NR-II-catalyzed conversion of NR-I to NR-I-phosphate, the transcriptional activator of glnA. When P-II is phosphorylated, these events are reversed. In nitrogen-limiting conditions, when the ratio of Gln to 2-ketoglutarate decreases, P-II is phosphorylated which allows the deadenylation of glutamine synthetase (GS), thus activating the enzyme. The sequence is that of Nitrogen regulatory protein P-II (glnB) from Microchaete diplosiphon (Fremyella diplosiphon).